A 413-amino-acid polypeptide reads, in one-letter code: Elongation factor 1-alpha (413 aa).

The region spanning 5 to 211 (KEHMNLAFIG…DDLEAPEKPV (207 aa)) is the tr-type G domain. The tract at residues 14-21 (GHVDHGKS) is G1. GTP is bound at residue 14–21 (GHVDHGKS). Serine 21 is a binding site for Mg(2+). Residues 60-64 (GVTID) are G2. A G3 region spans residues 81–84 (DCPG). GTP contacts are provided by residues 81 to 85 (DCPGH) and 136 to 139 (NKMD). Positions 136–139 (NKMD) are G4. The tract at residues 175-177 (SAF) is G5.

It belongs to the TRAFAC class translation factor GTPase superfamily. Classic translation factor GTPase family. EF-Tu/EF-1A subfamily.

Its subcellular location is the cytoplasm. The catalysed reaction is GTP + H2O = GDP + phosphate + H(+). GTP hydrolase that promotes the GTP-dependent binding of aminoacyl-tRNA to the A-site of ribosomes during protein biosynthesis. This chain is Elongation factor 1-alpha, found in Methanothermobacter thermautotrophicus (strain ATCC 29096 / DSM 1053 / JCM 10044 / NBRC 100330 / Delta H) (Methanobacterium thermoautotrophicum).